The chain runs to 334 residues: uncharacterized protein (334 aa).

Belongs to the Gfo/Idh/MocA family.

This is an uncharacterized protein from Rhizobium meliloti (Ensifer meliloti).